A 406-amino-acid chain; its full sequence is Tryptophan synthase beta chain (406 aa).

N6-(pyridoxal phosphate)lysine is present on lysine 99.

Belongs to the TrpB family. As to quaternary structure, tetramer of two alpha and two beta chains. Pyridoxal 5'-phosphate is required as a cofactor.

It catalyses the reaction (1S,2R)-1-C-(indol-3-yl)glycerol 3-phosphate + L-serine = D-glyceraldehyde 3-phosphate + L-tryptophan + H2O. Its pathway is amino-acid biosynthesis; L-tryptophan biosynthesis; L-tryptophan from chorismate: step 5/5. Functionally, the beta subunit is responsible for the synthesis of L-tryptophan from indole and L-serine. This chain is Tryptophan synthase beta chain, found in Rhizobium leguminosarum bv. trifolii (strain WSM2304).